The chain runs to 247 residues: Uridylate kinase (247 aa).

Position 21 to 24 (21 to 24 (KVSG)) interacts with ATP. Gly63 lines the UMP pocket. Gly64 and Arg68 together coordinate ATP. UMP is bound by residues Asp83 and 144-151 (TGNPFCTT). The ATP site is built by Thr171, Gln172, Tyr177, and Asp180.

This sequence belongs to the UMP kinase family. In terms of assembly, homohexamer.

Its subcellular location is the cytoplasm. It catalyses the reaction UMP + ATP = UDP + ADP. It functions in the pathway pyrimidine metabolism; CTP biosynthesis via de novo pathway; UDP from UMP (UMPK route): step 1/1. Its activity is regulated as follows. Inhibited by UTP. Functionally, catalyzes the reversible phosphorylation of UMP to UDP. The chain is Uridylate kinase from Rickettsia rickettsii (strain Sheila Smith).